Reading from the N-terminus, the 895-residue chain is MSGFFRKVGDSDSESDISSSEEELSELESGDEQPKTTQPAASRSRFLKGSDDDSDSDDDDSDDDDQDSLDSDDDNGERRTDGKKAPTSRFMKGAADSDDSDSEEEVKKVVKSAKDKRIDDMQTIVNHIESAQKSSDWTSINKDFDNLMRSIERQRTLNEQIPAFFYKAISQLDQYLNESAAKEKDAKKKMKAPVAKAMNGMKQKLKKVIKENDETIARYRSDPEGFEAAAEAALSAAAAPADAETAIAKGKKERLAAALDSDANDDFQTVGRGGRTETFTSEGLFKSLTAIMEARGKKSTDKNEQIRKLHDLSGVADSPYKKIRVILALVAARFDYNASATAYMPVEMWDSARKEINEIVALLGKNRSYVVREETEDYDDEVERVPGQNGEKDVVAVRGSIISFVDRLDDEFTKSLQNIDPHTTEYVDRLCDEKKLYETIVLAQGYFESQSETEALSRCTMRRLDHVYAKQDVIIKALESTLGEAAKTFESKLFPSAVRVAEQDGPAVLVRALCTYLYQARGVQAERPRTRAVLCHIYFHALHADYHVARDMFLMSHLQDAIQLADVATQILYNRVVVQIGICAFRNGLIKESQVALQEIFATGRVKELLAQGVQKQNQFSTVTPEQEKLERQRQLPFHMHINLELLECIYLISSMLLEVPNMALAGNDPELRKRVISRPFRRMLDYTDRQVFSGPPENTRDHIMQACKALQNGDCKACIELISDIKIWKLMPGSQEVKLMLAKRIQEVGLRTYLFSYSAYYESVSLSHLAATFDVEETVVKAMVSKMIYNDELAASLDPSANVVSFHRLELTKVQQLAATLAEKANSMLEQNERLLDAKLGEGKEQRSGAGGERGDREGGQPGGRRERRGGSAARGRGRGRGRAQQFQALGQKV.

The tract at residues 1–108 (MSGFFRKVGD…DSDSEEEVKK (108 aa)) is disordered. 2 stretches are compositionally biased toward acidic residues: residues 11 to 31 (SDSE…ESGD) and 52 to 75 (DDSD…DDDN). Residues 638 to 812 (FHMHINLELL…NVVSFHRLEL (175 aa)) form the PCI domain. Over residues 838 to 860 (DAKLGEGKEQRSGAGGERGDREG) the composition is skewed to basic and acidic residues. The disordered stretch occupies residues 838-895 (DAKLGEGKEQRSGAGGERGDREGGQPGGRRERRGGSAARGRGRGRGRAQQFQALGQKV). Low complexity predominate over residues 884–895 (RAQQFQALGQKV).

The protein belongs to the eIF-3 subunit C family. Component of the eukaryotic translation initiation factor 3 (eIF-3) complex.

The protein localises to the cytoplasm. Its function is as follows. Component of the eukaryotic translation initiation factor 3 (eIF-3) complex, which is involved in protein synthesis of a specialized repertoire of mRNAs and, together with other initiation factors, stimulates binding of mRNA and methionyl-tRNAi to the 40S ribosome. The eIF-3 complex specifically targets and initiates translation of a subset of mRNAs involved in cell proliferation. This is Eukaryotic translation initiation factor 3 subunit C from Mycosarcoma maydis (Corn smut fungus).